The primary structure comprises 89 residues: Cell division topological specificity factor (89 aa).

The protein belongs to the MinE family.

In terms of biological role, prevents the cell division inhibition by proteins MinC and MinD at internal division sites while permitting inhibition at polar sites. This ensures cell division at the proper site by restricting the formation of a division septum at the midpoint of the long axis of the cell. The chain is Cell division topological specificity factor from Heliobacterium modesticaldum (strain ATCC 51547 / Ice1).